Consider the following 429-residue polypeptide: Serine hydroxymethyltransferase (429 aa).

Position 120-122 (120-122) interacts with (6S)-5,6,7,8-tetrahydrofolate; the sequence is GHI. The residue at position 226 (Lys-226) is an N6-(pyridoxal phosphate)lysine.

It belongs to the SHMT family. In terms of assembly, homodimer. The cofactor is pyridoxal 5'-phosphate.

The protein localises to the cytoplasm. The catalysed reaction is 5,10-methylenetetrahydromethanopterin + glycine + H2O = 5,6,7,8-tetrahydromethanopterin + L-serine. It catalyses the reaction L-allo-threonine = acetaldehyde + glycine. The protein operates within amino-acid biosynthesis; glycine biosynthesis; glycine from L-serine: step 1/1. Its function is as follows. Catalyzes the reversible interconversion of serine and glycine with tetrahydromethanopterin (H4MPT) serving as the one-carbon carrier. The use of tetrahydrofolate (THF or H4PteGlu) as the pteridine substrate is 450-fold less efficient than that of H4MPT. Also exhibits a pteridine-independent aldolase activity toward beta-hydroxyamino acids, producing glycine and aldehydes, via a retro-aldol mechanism. Thus, is able to catalyze the cleavage of L-allo-threonine and L-threo-beta-phenylserine. The polypeptide is Serine hydroxymethyltransferase (Methanocaldococcus jannaschii (strain ATCC 43067 / DSM 2661 / JAL-1 / JCM 10045 / NBRC 100440) (Methanococcus jannaschii)).